The sequence spans 365 residues: TD and POZ domain-containing protein 1 (365 aa).

In terms of domain architecture, MATH spans 19–149 (KFCYKWTISN…EDQLTICCKV (131 aa)). A BTB domain is found at 188–250 (TDCCLLVAGH…EMMGFIYTGK (63 aa)).

This sequence belongs to the Tdpoz family.

This chain is TD and POZ domain-containing protein 1, found in Mus musculus (Mouse).